Here is a 929-residue protein sequence, read N- to C-terminus: Probable LRR receptor-like serine/threonine-protein kinase At1g67720 (929 aa).

The first 21 residues, 1–21 (MGLCLAQLAVTCLFLVPFVLS), serve as a signal peptide directing secretion. Residues 22–531 (QVTEFVSIDC…NEAQRKHFWQ (510 aa)) lie on the Extracellular side of the membrane. N-linked (GlcNAc...) asparagine glycosylation is found at asparagine 36, asparagine 173, asparagine 236, asparagine 293, asparagine 320, asparagine 332, and asparagine 407. LRR repeat units follow at residues 413 to 437 (PPRV…INYM), 438 to 460 (EALT…MSKL), 461 to 484 (VNLK…LAHL), and 485 to 508 (PNLQ…LLKG). Residue asparagine 494 is glycosylated (N-linked (GlcNAc...) asparagine). Residues 532-552 (ILGISIAAVAILLLLVGGSLV) traverse the membrane as a helical segment. Residues 553–929 (LLCALRKTKR…SRNSLAPAAR (377 aa)) are Cytoplasmic-facing. In terms of domain architecture, Protein kinase spans 606 to 880 (DNFSKKVGRG…EVIVAIQDAI (275 aa)). Residues 612-620 (VGRGSFGSV) and lysine 634 contribute to the ATP site. Tyrosine 679 is modified (phosphotyrosine). The active-site Proton acceptor is aspartate 731. Phosphoserine is present on residues serine 735 and serine 764. Threonine 770 carries the post-translational modification Phosphothreonine. The residue at position 778 (tyrosine 778) is a Phosphotyrosine.

It belongs to the protein kinase superfamily. Ser/Thr protein kinase family.

The protein localises to the membrane. It catalyses the reaction L-seryl-[protein] + ATP = O-phospho-L-seryl-[protein] + ADP + H(+). It carries out the reaction L-threonyl-[protein] + ATP = O-phospho-L-threonyl-[protein] + ADP + H(+). The polypeptide is Probable LRR receptor-like serine/threonine-protein kinase At1g67720 (Arabidopsis thaliana (Mouse-ear cress)).